Here is a 408-residue protein sequence, read N- to C-terminus: Aspartokinase 2 (408 aa).

7–10 (KFGG) provides a ligand contact to ATP. 25-30 (RAIAEK) is a substrate binding site. Position 41 (S41) interacts with ATP. Residues 47-49 (TDE), E74, 125-126 (LE), 150-153 (RGGS), and S153 each bind substrate. ATP is bound by residues 173-174 (TD) and 179-184 (FTTDPR). 2 ACT domains span residues 264-337 (VTIY…TESK) and 343-408 (IVGS…PSAV). Residues 289-291 (NVD), Q295, 354-355 (VA), 368-369 (LI), and 375-376 (SE) contribute to the substrate site.

The protein belongs to the aspartokinase family. Tetramer consisting of 2 isoforms Alpha (catalytic and regulation) and of a homodimer of 2 isoforms Beta (regulation).

The enzyme catalyses L-aspartate + ATP = 4-phospho-L-aspartate + ADP. It functions in the pathway amino-acid biosynthesis; L-lysine biosynthesis via DAP pathway; (S)-tetrahydrodipicolinate from L-aspartate: step 1/4. The protein operates within amino-acid biosynthesis; L-methionine biosynthesis via de novo pathway; L-homoserine from L-aspartate: step 1/3. Its pathway is amino-acid biosynthesis; L-threonine biosynthesis; L-threonine from L-aspartate: step 1/5. With respect to regulation, lysine-sensitive. Regulated by degradation in response to starvation of cells for various nutrients. Ammonium starvation induced the fastest aspartokinase II decline, followed by amino acid starvation and glucose limitation. Functionally, catalyzes the phosphorylation of the beta-carboxyl group of aspartic acid with ATP to yield 4-phospho-L-aspartate, which is involved in the branched biosynthetic pathway leading to the biosynthesis of amino acids threonine, isoleucine and methionine. This is Aspartokinase 2 (lysC) from Bacillus subtilis (strain 168).